Consider the following 561-residue polypeptide: BTB/POZ domain-containing protein At2g46260 (561 aa).

Disordered regions lie at residues 1–31 (MRGS…EGDF) and 100–119 (LTDN…NLDD). Residues 17–28 (DSNFSRHGSSSE) are compositionally biased toward polar residues. Over residues 107-119 (DMDDAPGGDNLDD) the composition is skewed to acidic residues. One can recognise a BTB domain in the interval 143–212 (IDCSTVVRVK…MYSNSLSVTT (70 aa)). In terms of domain architecture, BACK spans 266–358 (QPLTDAAKQF…YMTCRKLKKV (93 aa)).

Its pathway is protein modification; protein ubiquitination. Functionally, may act as a substrate-specific adapter of an E3 ubiquitin-protein ligase complex (CUL3-RBX1-BTB) which mediates the ubiquitination and subsequent proteasomal degradation of target proteins. In Arabidopsis thaliana (Mouse-ear cress), this protein is BTB/POZ domain-containing protein At2g46260.